The primary structure comprises 266 residues: Large ribosomal subunit protein eL8 (266 aa).

Residues Lys11, Lys20, and Lys21 each participate in a glycyl lysine isopeptide (Lys-Gly) (interchain with G-Cter in SUMO2) cross-link. The residue at position 34 (Lys34) is an N6-acetyllysine. Lys48 is covalently cross-linked (Glycyl lysine isopeptide (Lys-Gly) (interchain with G-Cter in SUMO2)). The residue at position 97 (Lys97) is an N6-acetyllysine; alternate. Lys97 participates in a covalent cross-link: Glycyl lysine isopeptide (Lys-Gly) (interchain with G-Cter in SUMO2); alternate. Lys125 is covalently cross-linked (Glycyl lysine isopeptide (Lys-Gly) (interchain with G-Cter in SUMO2)). N6-acetyllysine is present on Lys217. Residue Lys245 forms a Glycyl lysine isopeptide (Lys-Gly) (interchain with G-Cter in SUMO2) linkage.

The protein belongs to the eukaryotic ribosomal protein eL8 family. As to quaternary structure, component of the large ribosomal subunit. Interacts with CRY1. Interacts with DICER1, AGO2, TARBP2, MOV10 and EIF6; they form a large RNA-induced silencing complex (RISC).

It localises to the cytoplasm. Component of the large ribosomal subunit. The ribosome is a large ribonucleoprotein complex responsible for the synthesis of proteins in the cell. In Bos taurus (Bovine), this protein is Large ribosomal subunit protein eL8 (RPL7A).